The following is a 117-amino-acid chain: Iron-sulfur cluster insertion protein ErpA (117 aa).

Iron-sulfur cluster contacts are provided by Cys-45, Cys-109, and Cys-111.

This sequence belongs to the HesB/IscA family. As to quaternary structure, homodimer. Requires iron-sulfur cluster as cofactor.

In terms of biological role, required for insertion of 4Fe-4S clusters for at least IspG. This is Iron-sulfur cluster insertion protein ErpA from Saccharophagus degradans (strain 2-40 / ATCC 43961 / DSM 17024).